A 241-amino-acid polypeptide reads, in one-letter code: Probable 2-phosphosulfolactate phosphatase (241 aa).

Belongs to the ComB family. Requires Mg(2+) as cofactor.

It catalyses the reaction (2R)-O-phospho-3-sulfolactate + H2O = (2R)-3-sulfolactate + phosphate. The polypeptide is Probable 2-phosphosulfolactate phosphatase (Caldanaerobacter subterraneus subsp. tengcongensis (strain DSM 15242 / JCM 11007 / NBRC 100824 / MB4) (Thermoanaerobacter tengcongensis)).